A 652-amino-acid polypeptide reads, in one-letter code: MSQPHRYPIPASLAERTLVSAEQYRKLYEQSINDPDSFWREYAQIVEWITPFQTVKNTTFDPGHVNIRWFEDGTLNVAANCLDRHLQERGDQTAIIWEGDDASQSKTLTYRQLHQAVCRFANVLKAQGIGKGDVVALYMPMVPEAAVAMLACARIGAVHSVIFAGFSPEAIAGRIIDSSAKLVVTADEGLRAGRKIPLKKNIDDALNHPEVKSVNRVIVFRRTGNAIDWQPERDVWWHDAIDGADDTCPPEAMGAEDPLFILYTSGSTGTPKGVLHTTGGYLVYAATTFKYVFDYHPGDVYWCTADVGWVTGHSYLLYGPLACCAITLMFEGVPNWPAASRMAQVVDKHQVNILYTAPTAIRALMAEGDKAITGTHRSSLRIMGSVGEPINPEAWEWYYHKIGNGRCPIVDTWWQTETGGFMITPLPGAMALKPGSAALPFFGVQPALVDNVGTPVDGAGEGNLVITDSWPGQARTLYGDHDRFKQTYFYTFKGMYFSGDGARRDEDGYYWITGRVDDVLNVSGHRLGTSEIESALVAHPKIAEAAVVGMPHNIKGQAIYAYITLNAGETPTPELYNEVRAWMRKEIGAIATPDVLHWTDSLPKTRSGKIMRRILRKIAAGDTGNLGDTSTLADPGVVEKLLEEKHTLTLPS.

CoA is bound by residues 191-194, Thr-311, and Asn-335; that span reads RAGR. Residues 387 to 389, 411 to 416, Asp-500, and Arg-515 contribute to the ATP site; these read GEP and DTWWQT. Ser-523 contacts CoA. Arg-526 contributes to the ATP binding site. The Mg(2+) site is built by Val-537, His-539, and Ile-542. Arg-584 serves as a coordination point for CoA. Lys-609 carries the N6-acetyllysine modification.

Belongs to the ATP-dependent AMP-binding enzyme family. Mg(2+) serves as cofactor. Post-translationally, acetylated. Deacetylation by the SIR2-homolog deacetylase activates the enzyme.

It carries out the reaction acetate + ATP + CoA = acetyl-CoA + AMP + diphosphate. In terms of biological role, catalyzes the conversion of acetate into acetyl-CoA (AcCoA), an essential intermediate at the junction of anabolic and catabolic pathways. Acs undergoes a two-step reaction. In the first half reaction, Acs combines acetate with ATP to form acetyl-adenylate (AcAMP) intermediate. In the second half reaction, it can then transfer the acetyl group from AcAMP to the sulfhydryl group of CoA, forming the product AcCoA. Its function is as follows. Enables the cell to use acetate during aerobic growth to generate energy via the TCA cycle, and biosynthetic compounds via the glyoxylate shunt. Acetylates CheY, the response regulator involved in flagellar movement and chemotaxis. This chain is Acetyl-coenzyme A synthetase, found in Sodalis glossinidius (strain morsitans).